The following is a 438-amino-acid chain: 3-phosphoshikimate 1-carboxyvinyltransferase (438 aa).

3-phosphoshikimate is bound by residues K26, S27, and R31. K26 lines the phosphoenolpyruvate pocket. Phosphoenolpyruvate contacts are provided by G99 and R127. Residues S172, Q174, D320, and K347 each contribute to the 3-phosphoshikimate site. Q174 contacts phosphoenolpyruvate. The active-site Proton acceptor is D320. Phosphoenolpyruvate-binding residues include R351 and R392.

It belongs to the EPSP synthase family. In terms of assembly, monomer.

The protein localises to the cytoplasm. It catalyses the reaction 3-phosphoshikimate + phosphoenolpyruvate = 5-O-(1-carboxyvinyl)-3-phosphoshikimate + phosphate. Its pathway is metabolic intermediate biosynthesis; chorismate biosynthesis; chorismate from D-erythrose 4-phosphate and phosphoenolpyruvate: step 6/7. Catalyzes the transfer of the enolpyruvyl moiety of phosphoenolpyruvate (PEP) to the 5-hydroxyl of shikimate-3-phosphate (S3P) to produce enolpyruvyl shikimate-3-phosphate and inorganic phosphate. The protein is 3-phosphoshikimate 1-carboxyvinyltransferase of Xanthomonas campestris pv. campestris (strain B100).